A 433-amino-acid polypeptide reads, in one-letter code: Trigger factor (433 aa).

Positions 161-246 constitute a PPIase FKBP-type domain; that stretch reads EDRVVIDFVG…LKKVENIVLP (86 aa).

Belongs to the FKBP-type PPIase family. Tig subfamily.

It localises to the cytoplasm. It carries out the reaction [protein]-peptidylproline (omega=180) = [protein]-peptidylproline (omega=0). Involved in protein export. Acts as a chaperone by maintaining the newly synthesized protein in an open conformation. Functions as a peptidyl-prolyl cis-trans isomerase. The protein is Trigger factor of Actinobacillus pleuropneumoniae serotype 5b (strain L20).